Here is a 157-residue protein sequence, read N- to C-terminus: NudC domain-containing protein 2 (157 aa).

Serine 2 bears the N-acetylserine mark. Residues 14–104 (CGTPWGQWYQ…DAANCWTSLL (91 aa)) enclose the CS domain. The disordered stretch occupies residues 134 to 157 (FDFSGAEISGNYTKGGPDFSNLEK). A Phosphoserine modification is found at serine 142. Tyrosine 145 bears the Phosphotyrosine mark.

In terms of assembly, interacts with LIS1.

It is found in the chromosome. It localises to the centromere. Its subcellular location is the kinetochore. The protein localises to the cytoplasm. The protein resides in the cytoskeleton. It is found in the microtubule organizing center. It localises to the centrosome. Its subcellular location is the spindle pole. May regulate the LIS1/dynein pathway by stabilizing LIS1 with Hsp90 chaperone. This is NudC domain-containing protein 2 (NUDCD2) from Homo sapiens (Human).